A 181-amino-acid chain; its full sequence is MARMKDKYLALKAELQADLGIKNPMQTPALEKIVISVGAGFAMKDNKLIQNIEDTITTIAGQKASTVIAKKSVAGFKVREGMPVGVRVTLRGEKMYNFFDRLVSMALPRVKDFRGVPRNGFDGRGNYNFGLQEQLIFPEVSYDSVMQIHGMNITVVTSAESDKAGFALLEKMGMPFSKGSN.

This sequence belongs to the universal ribosomal protein uL5 family. Part of the 50S ribosomal subunit; part of the 5S rRNA/L5/L18/L25 subcomplex. Contacts the 5S rRNA and the P site tRNA. Forms a bridge to the 30S subunit in the 70S ribosome.

Functionally, this is one of the proteins that bind and probably mediate the attachment of the 5S RNA into the large ribosomal subunit, where it forms part of the central protuberance. In the 70S ribosome it contacts protein S13 of the 30S subunit (bridge B1b), connecting the 2 subunits; this bridge is implicated in subunit movement. Contacts the P site tRNA; the 5S rRNA and some of its associated proteins might help stabilize positioning of ribosome-bound tRNAs. In Sulfurimonas denitrificans (strain ATCC 33889 / DSM 1251) (Thiomicrospira denitrificans (strain ATCC 33889 / DSM 1251)), this protein is Large ribosomal subunit protein uL5.